Consider the following 348-residue polypeptide: Dihydroorotase (348 aa).

2 residues coordinate Zn(2+): H17 and H19. Substrate is bound by residues 19 to 21 (HLR) and N45. Zn(2+) is bound by residues K103, H140, and H178. K103 carries the post-translational modification N6-carboxylysine. H140 provides a ligand contact to substrate. L223 provides a ligand contact to substrate. D251 serves as a coordination point for Zn(2+). Residue D251 is part of the active site. Substrate contacts are provided by H255 and A267.

Belongs to the metallo-dependent hydrolases superfamily. DHOase family. Class II DHOase subfamily. Homodimer. Zn(2+) serves as cofactor.

It carries out the reaction (S)-dihydroorotate + H2O = N-carbamoyl-L-aspartate + H(+). Its pathway is pyrimidine metabolism; UMP biosynthesis via de novo pathway; (S)-dihydroorotate from bicarbonate: step 3/3. In terms of biological role, catalyzes the reversible cyclization of carbamoyl aspartate to dihydroorotate. In Shigella boydii serotype 4 (strain Sb227), this protein is Dihydroorotase.